Here is a 248-residue protein sequence, read N- to C-terminus: Aspartate/glutamate leucyltransferase (248 aa).

Belongs to the R-transferase family. Bpt subfamily.

It localises to the cytoplasm. It catalyses the reaction N-terminal L-glutamyl-[protein] + L-leucyl-tRNA(Leu) = N-terminal L-leucyl-L-glutamyl-[protein] + tRNA(Leu) + H(+). It carries out the reaction N-terminal L-aspartyl-[protein] + L-leucyl-tRNA(Leu) = N-terminal L-leucyl-L-aspartyl-[protein] + tRNA(Leu) + H(+). Functions in the N-end rule pathway of protein degradation where it conjugates Leu from its aminoacyl-tRNA to the N-termini of proteins containing an N-terminal aspartate or glutamate. In Methylorubrum populi (strain ATCC BAA-705 / NCIMB 13946 / BJ001) (Methylobacterium populi), this protein is Aspartate/glutamate leucyltransferase.